The primary structure comprises 522 residues: Maturase K (522 aa).

The protein belongs to the intron maturase 2 family. MatK subfamily.

It localises to the plastid. It is found in the chloroplast. Its function is as follows. Usually encoded in the trnK tRNA gene intron. Probably assists in splicing its own and other chloroplast group II introns. The chain is Maturase K from Dianella ensifolia (Flax lily).